The chain runs to 240 residues: Large ribosomal subunit protein uL2 (240 aa).

The interval 199 to 240 (DHPFGGGGRQHPGRPKSVSRDAAPGRKVGDIASKRTGRGGNE) is disordered. The segment covering 221 to 231 (APGRKVGDIAS) has biased composition (basic and acidic residues).

Belongs to the universal ribosomal protein uL2 family. Part of the 50S ribosomal subunit. Forms a bridge to the 30S subunit in the 70S ribosome.

In terms of biological role, one of the primary rRNA binding proteins. Required for association of the 30S and 50S subunits to form the 70S ribosome, for tRNA binding and peptide bond formation. It has been suggested to have peptidyltransferase activity; this is somewhat controversial. Makes several contacts with the 16S rRNA in the 70S ribosome. This chain is Large ribosomal subunit protein uL2, found in Halobacterium salinarum (strain ATCC 29341 / DSM 671 / R1).